A 540-amino-acid chain; its full sequence is GMP synthase [glutamine-hydrolyzing] (540 aa).

In terms of domain architecture, Glutamine amidotransferase type-1 spans 24 to 217; it reads KILIVDFGSQ…VRKVAGLTGD (194 aa). Cysteine 101 functions as the Nucleophile in the catalytic mechanism. Catalysis depends on residues histidine 191 and glutamate 193. The GMPS ATP-PPase domain occupies 218–415; sequence WTMRAFREEA…LGLPEIFVGR (198 aa). 245-251 contacts ATP; that stretch reads SGGVDSS.

Homodimer.

The enzyme catalyses XMP + L-glutamine + ATP + H2O = GMP + L-glutamate + AMP + diphosphate + 2 H(+). The protein operates within purine metabolism; GMP biosynthesis; GMP from XMP (L-Gln route): step 1/1. Catalyzes the synthesis of GMP from XMP. In Nitrobacter hamburgensis (strain DSM 10229 / NCIMB 13809 / X14), this protein is GMP synthase [glutamine-hydrolyzing].